The chain runs to 444 residues: 23S rRNA (uracil(1939)-C(5))-methyltransferase RlmD (444 aa).

The TRAM domain maps to 5 to 64 (KPKLNLTSQTARIVNLSHDGRGIARINGKATFIQGALPGEVVEFQYTRVKKDFDEGKLLS). 4 residues coordinate [4Fe-4S] cluster: C77, C83, C86, and C166. Positions 276, 305, 310, 326, 353, and 374 each coordinate S-adenosyl-L-methionine. C400 functions as the Nucleophile in the catalytic mechanism.

Belongs to the class I-like SAM-binding methyltransferase superfamily. RNA M5U methyltransferase family. RlmD subfamily.

The enzyme catalyses uridine(1939) in 23S rRNA + S-adenosyl-L-methionine = 5-methyluridine(1939) in 23S rRNA + S-adenosyl-L-homocysteine + H(+). Functionally, catalyzes the formation of 5-methyl-uridine at position 1939 (m5U1939) in 23S rRNA. The sequence is that of 23S rRNA (uracil(1939)-C(5))-methyltransferase RlmD from Legionella pneumophila (strain Lens).